The primary structure comprises 237 residues: Protein GrpE (237 aa).

2 disordered regions span residues 1–52 (MSGD…RLQQ) and 200–237 (KVSM…EPGV). Over residues 27–40 (ASMNSDEGQPSAQS) the composition is skewed to polar residues. The span at 204-218 (GPGPQSGASPSSAQS) shows a compositional bias: low complexity.

The protein belongs to the GrpE family. In terms of assembly, homodimer.

It is found in the cytoplasm. Participates actively in the response to hyperosmotic and heat shock by preventing the aggregation of stress-denatured proteins, in association with DnaK and GrpE. It is the nucleotide exchange factor for DnaK and may function as a thermosensor. Unfolded proteins bind initially to DnaJ; upon interaction with the DnaJ-bound protein, DnaK hydrolyzes its bound ATP, resulting in the formation of a stable complex. GrpE releases ADP from DnaK; ATP binding to DnaK triggers the release of the substrate protein, thus completing the reaction cycle. Several rounds of ATP-dependent interactions between DnaJ, DnaK and GrpE are required for fully efficient folding. This chain is Protein GrpE, found in Prochlorococcus marinus (strain MIT 9303).